The sequence spans 417 residues: Diphosphomevalonate decarboxylase 1 (417 aa).

22-25 (YWGK) is a binding site for (R)-5-diphosphomevalonate. A Peroxisomal targeting signal PTS2 motif is present at residues 39–47 (RVSLDPDHL). (R)-5-diphosphomevalonate-binding positions include arginine 77, 160-165 (SGSACR), and threonine 216.

This sequence belongs to the diphosphomevalonate decarboxylase family. In terms of assembly, homodimer.

The protein localises to the peroxisome. The catalysed reaction is (R)-5-diphosphomevalonate + ATP = isopentenyl diphosphate + ADP + phosphate + CO2. Its pathway is isoprenoid biosynthesis; isopentenyl diphosphate biosynthesis via mevalonate pathway; isopentenyl diphosphate from (R)-mevalonate: step 3/3. Functionally, performs the first committed step in the biosynthesis of isoprene-containing compounds such as sterols and terpenoids. Component of the triterpene saponins (e.g. ginsenosides or panaxosides) and phytosterols biosynthetic pathways. Catalyzes the conversion of mevalonate diphosphate to isopentenyl diphosphate (IPP). This Panax ginseng (Korean ginseng) protein is Diphosphomevalonate decarboxylase 1.